Reading from the N-terminus, the 441-residue chain is Amino-acid acetyltransferase (441 aa).

The region spanning 295 to 434 is the N-acetyltransferase domain; the sequence is EQVRRATIND…QALYNYQRRS (140 aa).

It belongs to the acetyltransferase family. ArgA subfamily. Homohexamer.

It is found in the cytoplasm. The catalysed reaction is L-glutamate + acetyl-CoA = N-acetyl-L-glutamate + CoA + H(+). It participates in amino-acid biosynthesis; L-arginine biosynthesis; N(2)-acetyl-L-ornithine from L-glutamate: step 1/4. This Pectobacterium carotovorum subsp. carotovorum (strain PC1) protein is Amino-acid acetyltransferase.